The sequence spans 478 residues: Poly(A) RNA polymerase cid11 (478 aa).

Positions 106 and 108 each coordinate Mg(2+). Residues 263–317 form the PAP-associated domain; sequence SLGRLLIDFFYYYGFSFNYLDSVVSVRSGTVLNKQEKGWAMEVNNSLCVEEPFNT. Residues 428 to 447 are disordered; the sequence is QSYENKANRDSDFQGQTSLT.

Belongs to the DNA polymerase type-B-like family. It depends on Mg(2+) as a cofactor. Mn(2+) serves as cofactor.

It is found in the cytoplasm. The protein localises to the nucleus. The enzyme catalyses RNA(n) + ATP = RNA(n)-3'-adenine ribonucleotide + diphosphate. In Schizosaccharomyces pombe (strain 972 / ATCC 24843) (Fission yeast), this protein is Poly(A) RNA polymerase cid11 (cid11).